The primary structure comprises 65 residues: Large ribosomal subunit protein bL35 (65 aa).

Belongs to the bacterial ribosomal protein bL35 family.

This Wolbachia sp. subsp. Brugia malayi (strain TRS) protein is Large ribosomal subunit protein bL35.